Here is a 684-residue protein sequence, read N- to C-terminus: 1,4-alpha-glucan-branching enzyme (684 aa).

Residues Trp88 and Lys123 each coordinate (1,4-alpha-D-glucosyl)n. Residue Asp340 is the Nucleophile of the active site. The active-site Proton donor is the Glu395.

The protein belongs to the glycosyl hydrolase 13 family. GlgB subfamily.

It is found in the cytoplasm. The enzyme catalyses Transfers a segment of a (1-&gt;4)-alpha-D-glucan chain to a primary hydroxy group in a similar glucan chain.. It participates in glycan biosynthesis; glycogen biosynthesis. Its function is as follows. Glycogen-branching enzyme participates in the glycogen biosynthetic process along with glycogenin and glycogen synthase. Generates alpha-1,6-glucosidic branches from alpha-1,4-linked glucose chains, to increase solubility of the glycogen polymer. In Emericella nidulans (strain FGSC A4 / ATCC 38163 / CBS 112.46 / NRRL 194 / M139) (Aspergillus nidulans), this protein is 1,4-alpha-glucan-branching enzyme (be1).